Consider the following 161-residue polypeptide: Cytochrome c-type biogenesis protein CcmE (161 aa).

The Cytoplasmic segment spans residues 1-8; it reads MNPRRKKR. Residues 9–29 form a helical; Signal-anchor for type II membrane protein membrane-spanning segment; that stretch reads LGLILALFVGISATVGLMLYA. Residues 30–161 lie on the Periplasmic side of the membrane; it reads LNQNMDLFYT…TEQQKQGTGQ (132 aa). Residues His129 and Tyr133 each contribute to the heme site. The disordered stretch occupies residues 142-161; it reads MKKTHEPLQYTEQQKQGTGQ. Positions 151–161 are enriched in polar residues; sequence YTEQQKQGTGQ.

It belongs to the CcmE/CycJ family.

The protein resides in the cell inner membrane. Heme chaperone required for the biogenesis of c-type cytochromes. Transiently binds heme delivered by CcmC and transfers the heme to apo-cytochromes in a process facilitated by CcmF and CcmH. This is Cytochrome c-type biogenesis protein CcmE from Aliivibrio fischeri (strain ATCC 700601 / ES114) (Vibrio fischeri).